We begin with the raw amino-acid sequence, 464 residues long: Cysteine--tRNA ligase 1 (464 aa).

Position 28 (cysteine 28) interacts with Zn(2+). Positions 30-40 (VTIYDLCHIGH) match the 'HIGH' region motif. The Zn(2+) site is built by cysteine 209, histidine 234, and glutamate 238. The short motif at 266–270 (KMSKS) is the 'KMSKS' region element. An ATP-binding site is contributed by lysine 269.

The protein belongs to the class-I aminoacyl-tRNA synthetase family. In terms of assembly, monomer. It depends on Zn(2+) as a cofactor.

It localises to the cytoplasm. It catalyses the reaction tRNA(Cys) + L-cysteine + ATP = L-cysteinyl-tRNA(Cys) + AMP + diphosphate. This Photobacterium profundum (strain SS9) protein is Cysteine--tRNA ligase 1.